The chain runs to 388 residues: Dauer abnormal formation protein 25 (388 aa).

3 ANK repeats span residues 40 to 69, 74 to 103, and 107 to 137; these read SGMS…DVND, TLYT…RMYL, and IGKT…DVIE. Positions 321, 324, 333, 336, 341, 345, 353, and 357 each coordinate Zn(2+). The MYND-type zinc finger occupies 321–357; that stretch reads CSVCGHPGAKKRCTQCKLAYCSQECQKFDWPIHKKVC.

In terms of tissue distribution, expressed in many ciliated sensory neurons.

The protein localises to the cell projection. The protein resides in the cilium. May be involved in the trafficking and dendritic transport of signaling proteins, such as the receptor-type guanylate cyclases gcy-12 and daf-11, to the cilia. In ciliated sensory neurons, required for the calcium flux to the cytoplasm in response to onset and removal of a nitric oxide (NO) stimulus and is thereby required for the behavioral avoidance response to NO-producing organisms like P.aeruginosa. In Caenorhabditis elegans, this protein is Dauer abnormal formation protein 25 (daf-25).